The chain runs to 157 residues: ATP synthase subunit b (157 aa).

The helical transmembrane segment at 7–29 threads the bilayer; that stretch reads LISQAIAFSLFILFTARFVWPYL.

Belongs to the ATPase B chain family. In terms of assembly, F-type ATPases have 2 components, F(1) - the catalytic core - and F(0) - the membrane proton channel. F(1) has five subunits: alpha(3), beta(3), gamma(1), delta(1), epsilon(1). F(0) has three main subunits: a(1), b(2) and c(10-14). The alpha and beta chains form an alternating ring which encloses part of the gamma chain. F(1) is attached to F(0) by a central stalk formed by the gamma and epsilon chains, while a peripheral stalk is formed by the delta and b chains.

It localises to the cell inner membrane. Functionally, f(1)F(0) ATP synthase produces ATP from ADP in the presence of a proton or sodium gradient. F-type ATPases consist of two structural domains, F(1) containing the extramembraneous catalytic core and F(0) containing the membrane proton channel, linked together by a central stalk and a peripheral stalk. During catalysis, ATP synthesis in the catalytic domain of F(1) is coupled via a rotary mechanism of the central stalk subunits to proton translocation. Its function is as follows. Component of the F(0) channel, it forms part of the peripheral stalk, linking F(1) to F(0). This is ATP synthase subunit b from Nitrosomonas europaea (strain ATCC 19718 / CIP 103999 / KCTC 2705 / NBRC 14298).